We begin with the raw amino-acid sequence, 368 residues long: Phenylalanine--tRNA ligase alpha subunit (368 aa).

Mg(2+) is bound at residue E268.

Belongs to the class-II aminoacyl-tRNA synthetase family. Phe-tRNA synthetase alpha subunit type 1 subfamily. Tetramer of two alpha and two beta subunits. Mg(2+) serves as cofactor.

It localises to the cytoplasm. It catalyses the reaction tRNA(Phe) + L-phenylalanine + ATP = L-phenylalanyl-tRNA(Phe) + AMP + diphosphate + H(+). This is Phenylalanine--tRNA ligase alpha subunit from Nitrobacter hamburgensis (strain DSM 10229 / NCIMB 13809 / X14).